A 397-amino-acid chain; its full sequence is Acetate kinase (397 aa).

Mg(2+) is bound at residue Asn-8. Lys-15 contacts ATP. Arg-89 contributes to the substrate binding site. Residue Asp-146 is the Proton donor/acceptor of the active site. ATP-binding positions include 206–210 (HLGNG), 281–283 (DLR), and 329–333 (GIGEN). Glu-382 is a binding site for Mg(2+).

Belongs to the acetokinase family. In terms of assembly, homodimer. It depends on Mg(2+) as a cofactor. Requires Mn(2+) as cofactor.

Its subcellular location is the cytoplasm. It catalyses the reaction acetate + ATP = acetyl phosphate + ADP. Its pathway is metabolic intermediate biosynthesis; acetyl-CoA biosynthesis; acetyl-CoA from acetate: step 1/2. Catalyzes the formation of acetyl phosphate from acetate and ATP. Can also catalyze the reverse reaction. The sequence is that of Acetate kinase from Bacillus cytotoxicus (strain DSM 22905 / CIP 110041 / 391-98 / NVH 391-98).